Here is a 448-residue protein sequence, read N- to C-terminus: NADH oxidase (448 aa).

FAD is bound by residues 7 to 11 (GSGAA), cysteine 42, valine 80, 110 to 113 (ATGA), and arginine 132. Residue cysteine 42 is the Redox-active of the active site. NAD(+)-binding positions include 152–167 (VAVVGAGAIGLEMAYG), glutamate 179, and glycine 243. Residues 271-281 (TSIPNIYAVGD), glycine 299, and threonine 300 each bind FAD. Valine 328 provides a ligand contact to NAD(+). Tyrosine 423 provides a ligand contact to FAD.

Belongs to the class-III pyridine nucleotide-disulfide oxidoreductase family. It depends on FAD as a cofactor.

It carries out the reaction 2 NADH + O2 + 2 H(+) = 2 NAD(+) + 2 H2O. Functionally, catalyzes the four-electron reduction of molecular oxygen to water. This chain is NADH oxidase, found in Methanocaldococcus jannaschii (strain ATCC 43067 / DSM 2661 / JAL-1 / JCM 10045 / NBRC 100440) (Methanococcus jannaschii).